Consider the following 277-residue polypeptide: Energy-coupling factor transporter ATP-binding protein EcfA1 (277 aa).

In terms of domain architecture, ABC transporter spans Ile-5–Asp-243. An ATP-binding site is contributed by Gly-42–Ser-49.

It belongs to the ABC transporter superfamily. Energy-coupling factor EcfA family. In terms of assembly, forms a stable energy-coupling factor (ECF) transporter complex composed of 2 membrane-embedded substrate-binding proteins (S component), 2 ATP-binding proteins (A component) and 2 transmembrane proteins (T component).

The protein resides in the cell membrane. ATP-binding (A) component of a common energy-coupling factor (ECF) ABC-transporter complex. Unlike classic ABC transporters this ECF transporter provides the energy necessary to transport a number of different substrates. The polypeptide is Energy-coupling factor transporter ATP-binding protein EcfA1 (Caldanaerobacter subterraneus subsp. tengcongensis (strain DSM 15242 / JCM 11007 / NBRC 100824 / MB4) (Thermoanaerobacter tengcongensis)).